Consider the following 485-residue polypeptide: MELFNKTAHELIDMIKSKEVKVEEVVKSYIARTECIDEKIGAYLYLSKESALKEAKLLDEKIQRGEKLKGLWGVPVGIKDNISVSGMQNTCASKILENYISPYDATVISRLKENNGIILGKLNMDEFAMGSSNENSAFKIVRNPWDLERIPGGSSGGSTAAVASREIPLSLGSETGGSVRQPAALCGVVGLKPTYGRISRYGVISFASTLDQVGTIGRDVTDCAILTEVISGFDKRDSTSARVAVPNYKESLKKDLTGIRIGLPKEFFKEDLDESIRKQIEDAIKILEKNGAEIKICSLPLAEYSLSAYYIISTAEASSNLARIDGIRYGRRINTLDKHEDIYIQSRNEGFGEEVKKRIMLGTYVLSKGCYEKYYEKALKVRTLIKEDFKRVLKEVDAIITPTSKVTAFKFGERTKEVLSMYSSDEYTVPASIAGLPAISIPCGFSKGLPVGFQLIGDYFREDILFNIGYSYEQSTDFHKIMAKL.

Active-site charge relay system residues include K79 and S154. The active-site Acyl-ester intermediate is the S178.

It belongs to the amidase family. GatA subfamily. As to quaternary structure, heterotrimer of A, B and C subunits.

The catalysed reaction is L-glutamyl-tRNA(Gln) + L-glutamine + ATP + H2O = L-glutaminyl-tRNA(Gln) + L-glutamate + ADP + phosphate + H(+). Functionally, allows the formation of correctly charged Gln-tRNA(Gln) through the transamidation of misacylated Glu-tRNA(Gln) in organisms which lack glutaminyl-tRNA synthetase. The reaction takes place in the presence of glutamine and ATP through an activated gamma-phospho-Glu-tRNA(Gln). In Clostridium novyi (strain NT), this protein is Glutamyl-tRNA(Gln) amidotransferase subunit A.